Consider the following 340-residue polypeptide: 3-isopropylmalate dehydrogenase (340 aa).

Arg-88, Arg-98, Arg-122, and Asp-212 together coordinate substrate. Mg(2+) is bound by residues Asp-212, Asp-236, and Asp-240. 272-284 is an NAD(+) binding site; the sequence is GSAPDIAGQGIAD.

The protein belongs to the isocitrate and isopropylmalate dehydrogenases family. LeuB type 2 subfamily. In terms of assembly, homodimer. It depends on Mg(2+) as a cofactor. Requires Mn(2+) as cofactor.

The protein localises to the cytoplasm. The enzyme catalyses (2R,3S)-3-isopropylmalate + NAD(+) = 4-methyl-2-oxopentanoate + CO2 + NADH. It functions in the pathway amino-acid biosynthesis; L-leucine biosynthesis; L-leucine from 3-methyl-2-oxobutanoate: step 3/4. Functionally, catalyzes the oxidation of 3-carboxy-2-hydroxy-4-methylpentanoate (3-isopropylmalate) to 3-carboxy-4-methyl-2-oxopentanoate. The product decarboxylates to 4-methyl-2 oxopentanoate. The chain is 3-isopropylmalate dehydrogenase from Corynebacterium glutamicum (strain R).